The primary structure comprises 276 residues: Large ribosomal subunit protein uL2 (276 aa).

Residues 221-276 (RGSAMNPNDHPHGGGEGRAPIGRKSPMTPWGKKARGVKTRDRKKASNALIIRRRTK) are disordered. Residues 252–276 (KKARGVKTRDRKKASNALIIRRRTK) show a composition bias toward basic residues.

This sequence belongs to the universal ribosomal protein uL2 family. In terms of assembly, part of the 50S ribosomal subunit. Forms a bridge to the 30S subunit in the 70S ribosome.

Functionally, one of the primary rRNA binding proteins. Required for association of the 30S and 50S subunits to form the 70S ribosome, for tRNA binding and peptide bond formation. It has been suggested to have peptidyltransferase activity; this is somewhat controversial. Makes several contacts with the 16S rRNA in the 70S ribosome. The chain is Large ribosomal subunit protein uL2 from Aster yellows phytoplasma.